Reading from the N-terminus, the 433-residue chain is Elongation factor 1-alpha (433 aa).

Residues K5–R227 enclose the tr-type G domain. The interval G14–S21 is G1. G14 to S21 contributes to the GTP binding site. Position 21 (S21) interacts with Mg(2+). Positions G70 to D74 are G2. The interval D91–G94 is G3. Residues D91–H95 and N153–D156 each bind GTP. The interval N153–D156 is G4. Positions S192–W194 are G5.

It belongs to the TRAFAC class translation factor GTPase superfamily. Classic translation factor GTPase family. EF-Tu/EF-1A subfamily.

The protein localises to the cytoplasm. It carries out the reaction GTP + H2O = GDP + phosphate + H(+). In terms of biological role, GTP hydrolase that promotes the GTP-dependent binding of aminoacyl-tRNA to the A-site of ribosomes during protein biosynthesis. This chain is Elongation factor 1-alpha, found in Thermofilum pendens (strain DSM 2475 / Hrk 5).